Reading from the N-terminus, the 206-residue chain is Large ribosomal subunit protein uL4 (206 aa).

The tract at residues 45 to 76 is disordered; sequence RQGNQSAKTRAEVSGGGKKPWRQKGTGRARQG.

It belongs to the universal ribosomal protein uL4 family. As to quaternary structure, part of the 50S ribosomal subunit.

In terms of biological role, one of the primary rRNA binding proteins, this protein initially binds near the 5'-end of the 23S rRNA. It is important during the early stages of 50S assembly. It makes multiple contacts with different domains of the 23S rRNA in the assembled 50S subunit and ribosome. Its function is as follows. Forms part of the polypeptide exit tunnel. This is Large ribosomal subunit protein uL4 from Clostridium novyi (strain NT).